A 96-amino-acid polypeptide reads, in one-letter code: DNA-binding protein HmvA (96 aa).

The interaction with DNA stretch occupies residues 52-55; the sequence is KTIK.

It belongs to the archaeal histone HMF family. In terms of assembly, homodimer. Dimers then assemble into higher oligomers, with the DNA wrapped around the protein core.

The protein resides in the cytoplasm. The protein localises to the chromosome. Binds and compact DNA (95 to 150 base pairs) to form nucleosome-like structures that contain positive DNA supercoils. Increases the resistance of DNA to thermal denaturation (in vitro). The polypeptide is DNA-binding protein HmvA (hmvA) (Methanocaldococcus jannaschii (strain ATCC 43067 / DSM 2661 / JAL-1 / JCM 10045 / NBRC 100440) (Methanococcus jannaschii)).